A 485-amino-acid polypeptide reads, in one-letter code: Efflux pump bik6 (485 aa).

6 helical membrane passes run 42 to 62 (VYTT…SAIY), 86 to 106 (LLIF…EVYG), 108 to 128 (KWPA…TATA), 139 to 159 (FFAG…IVDI), 172 to 192 (YGIT…AFIA), and 199 to 219 (WTEY…ALWL). The N-linked (GlcNAc...) asparagine glycan is linked to Asn241. 6 helical membrane passes run 269–289 (MLLD…YAIL), 306–326 (WGPV…LFAA), 353–373 (LPPM…FGWT), 379–399 (SSPW…TTIF), 417–437 (AIAA…LFVW), and 447–467 (WGST…FLFF).

This sequence belongs to the major facilitator superfamily.

Its subcellular location is the membrane. In terms of biological role, efflux pump; part of the gene cluster that mediates the biosynthesis of bikaverin, a red pigment also considered as a mycotoxin. The polypeptide is Efflux pump bik6 (Gibberella fujikuroi (strain CBS 195.34 / IMI 58289 / NRRL A-6831) (Bakanae and foot rot disease fungus)).